A 440-amino-acid polypeptide reads, in one-letter code: Chromosomal replication initiator protein DnaA (440 aa).

Residues 1 to 75 are domain I, interacts with DnaA modulators; sequence MNPNQILENL…QSGNKASVLI (75 aa). Positions 75-99 are domain II; it reads IQAQSAKQSSKSTKIDIAHIKAQST. The tract at residues 100-316 is domain III, AAA+ region; it reads ILNPSFTFES…GIIISLNAYA (217 aa). ATP-binding residues include Gly-146, Gly-148, Lys-149, and Thr-150. Residues 317–440 form a domain IV, binds dsDNA region; that stretch reads TILGQEITLE…KNKILVKSQS (124 aa).

It belongs to the DnaA family. As to quaternary structure, oligomerizes as a right-handed, spiral filament on DNA at oriC.

It is found in the cytoplasm. Its function is as follows. Plays an essential role in the initiation and regulation of chromosomal replication. ATP-DnaA binds to the origin of replication (oriC) to initiate formation of the DNA replication initiation complex once per cell cycle. Binds the DnaA box (a 9 base pair repeat at the origin) and separates the double-stranded (ds)DNA. Forms a right-handed helical filament on oriC DNA; dsDNA binds to the exterior of the filament while single-stranded (ss)DNA is stabiized in the filament's interior. The ATP-DnaA-oriC complex binds and stabilizes one strand of the AT-rich DNA unwinding element (DUE), permitting loading of DNA polymerase. After initiation quickly degrades to an ADP-DnaA complex that is not apt for DNA replication. Binds acidic phospholipids. In Campylobacter jejuni subsp. jejuni serotype O:6 (strain 81116 / NCTC 11828), this protein is Chromosomal replication initiator protein DnaA.